The following is a 520-amino-acid chain: MLPFRTLLKWSVNRNCCRGFAVSQQNYNSVKKGLVLGVYEKEKEEESLTLTNAGDAVDNAVLGKLRDQLARSGPSLKKGKSRIFYGLHEDFPSIVVVGLGKKSAGVNQHELWNEAKENIRAAVSVGCRQMQDMEIVQVEVDPCGDAQAAAEGAVLGLFEYNEMKKKKKKAVTTHLHGSSEITAWEKGVLYAEGQNLARHLMEAPANYITPTKFAETFEQRLANMGSNVKVFTRSKQWIEEQQMGAFLSVAKGSEEPPVFLEIHYSGSSDASQPPLVFVGKGVTFDSGGISLKPSSGMDAMRGDMGGAATVCSAITTAAKLKLPINIISLAPLCENMPNGRANKPGDVVKAKNGKTIQVDNTDAEGRLLLADALCYAHSFNPRAIVNAATLTGAMDVALGSAAAGVFTNSSWLWTHLQEASVVTGDRVWRMPLFEHYSKQVTESALADLNNIGKYSRSGGACTAAAFLKEFVTAPHWAHLDIAGVMSNKDEVPYLRKGMSGRPTRTLIEFAARLSEDKQTI.

4 residues coordinate Zn(2+): leucine 200, methionine 201, lysine 280, and aspartate 285. 4 residues coordinate substrate: lysine 280, aspartate 285, serine 290, and lysine 292. Mg(2+) is bound at residue aspartate 285. Residue lysine 292 is part of the active site. Residues arginine 301, aspartate 303, aspartate 362, and glutamate 364 each coordinate Zn(2+). The substrate site is built by aspartate 303 and aspartate 362. 2 residues coordinate Mg(2+): aspartate 362 and glutamate 364. Residue arginine 366 is part of the active site.

The protein belongs to the peptidase M17 family. In terms of assembly, homohexamer. Zn(2+) is required as a cofactor. It depends on Mn(2+) as a cofactor.

Its subcellular location is the cytoplasm. The catalysed reaction is Release of an N-terminal amino acid, Xaa-|-Yaa-, in which Xaa is preferably Leu, but may be other amino acids including Pro although not Arg or Lys, and Yaa may be Pro. Amino acid amides and methyl esters are also readily hydrolyzed, but rates on arylamides are exceedingly low.. It carries out the reaction an S-substituted L-cysteinylglycine + H2O = an S-substituted L-cysteine + glycine. It catalyses the reaction L-cysteinylglycine + H2O = L-cysteine + glycine. The enzyme catalyses S-benzyl-L-cysteinylglycine + H2O = S-benzyl-L-cysteine + glycine. The catalysed reaction is Release of N-terminal proline from a peptide.. In terms of biological role, cytosolic metallopeptidase that catalyzes the removal of unsubstituted N-terminal hydrophobic amino acids from various peptides. The presence of Zn(2+) ions is essential for the peptidase activity, and the association with other cofactors can modulate the substrate spectificity of the enzyme. For instance, in the presence of Mn(2+), it displays a specific Cys-Gly hydrolyzing activity of Cys-Gly-S-conjugates. Involved in the metabolism of glutathione and in the degradation of glutathione S-conjugates, which may play a role in the control of the cell redox status. This Xenopus tropicalis (Western clawed frog) protein is Cytosol aminopeptidase (lap3).